A 516-amino-acid polypeptide reads, in one-letter code: Maturase K (516 aa).

This sequence belongs to the intron maturase 2 family. MatK subfamily.

The protein resides in the plastid. The protein localises to the chloroplast. Its function is as follows. Usually encoded in the trnK tRNA gene intron. Probably assists in splicing its own and other chloroplast group II introns. This Colchicum speciosum (Giant meadow saffron) protein is Maturase K.